The chain runs to 202 residues: Neuroligin-3 (202 aa).

The Extracellular segment spans residues 1 to 202 (RYGSPTYFYA…TGTRMQGHSW (202 aa)). An intrachain disulfide couples Cys15 to Cys49. Residue Asn50 is glycosylated (N-linked (GlcNAc...) asparagine). A disordered region spans residues 154–202 (LRIPPTAPTSPAGPMARPGAPSGQPSHLPTATRMPRGPGTGTRMQGHSW).

Belongs to the type-B carboxylesterase/lipase family. Homodimer, and heterodimer with NLGN1 and NLGN2. Interacts with neurexins NRXN1, NRXN2 and NRXN3. Interaction with neurexins is mediated by heparan sulfate glycan modification on neurexin. Interacts (via its C-terminus) with DLG4/PSD-95 (via PDZ domain 3).

Its subcellular location is the cell membrane. The protein localises to the synapse. In terms of biological role, cell surface protein involved in cell-cell-interactions via its interactions with neurexin family members. Plays a role in synapse function and synaptic signal transmission, and probably mediates its effects by recruiting and clustering other synaptic proteins. May promote the initial formation of synapses, but is not essential for this. May also play a role in glia-glia or glia-neuron interactions in the developing peripheral nervous system. This chain is Neuroligin-3 (NLGN3), found in Macaca mulatta (Rhesus macaque).